The sequence spans 185 residues: Adenine phosphoribosyltransferase (185 aa).

Belongs to the purine/pyrimidine phosphoribosyltransferase family. Homodimer.

The protein localises to the cytoplasm. It carries out the reaction AMP + diphosphate = 5-phospho-alpha-D-ribose 1-diphosphate + adenine. The protein operates within purine metabolism; AMP biosynthesis via salvage pathway; AMP from adenine: step 1/1. Catalyzes a salvage reaction resulting in the formation of AMP, that is energically less costly than de novo synthesis. The protein is Adenine phosphoribosyltransferase of Corynebacterium glutamicum (strain ATCC 13032 / DSM 20300 / JCM 1318 / BCRC 11384 / CCUG 27702 / LMG 3730 / NBRC 12168 / NCIMB 10025 / NRRL B-2784 / 534).